The sequence spans 69 residues: Purkinje cell protein 4-like protein 1 (69 aa).

Residues 1 to 15 are compositionally biased toward polar residues; it reads MSELNTKTSPATNQA. The tract at residues 1–47 is disordered; the sequence is MSELNTKTSPATNQAPGPEEKGKAGSAKKTEDEEEEIDIDLTAPETE. T8 carries the phosphothreonine modification. Basic and acidic residues predominate over residues 18-31; that stretch reads PEEKGKAGSAKKTE. The 24-residue stretch at 46–69 folds into the IQ domain; sequence TEKAALAIQGKFRRFQKRKKDPSS.

Belongs to the PCP4 family.

This is Purkinje cell protein 4-like protein 1 (PCP4L1) from Bos taurus (Bovine).